A 270-amino-acid polypeptide reads, in one-letter code: MIITQADLREWRIGAVMYRWFLRHFPRGGSYADIHHALIEEGYTDWAESLVEYAWKKWLADENFAHQEVSSMQKLATDPGERPFCSQFARSDDHARIGCCEDNARIATAGYAAQIASMGYSVRIGSVGFNSHIGSSGERARVAVTGNSSRISSAGDSSRIANTGMRVRVCTLGERCHVASNGDLVQIASFGANARIANSGDNVHIIASGENSTVVSTGVVDSIILGPGGSAALAYHDGERVRFAVAIEGENNIRAGVRYRLNEQHQFVEC.

This is an uncharacterized protein from Escherichia coli (strain K12).